Reading from the N-terminus, the 298-residue chain is Bifunctional protein FolD (298 aa).

NADP(+) is bound by residues 167–169 (GRS), S192, and V233.

The protein belongs to the tetrahydrofolate dehydrogenase/cyclohydrolase family. In terms of assembly, homodimer.

The catalysed reaction is (6R)-5,10-methylene-5,6,7,8-tetrahydrofolate + NADP(+) = (6R)-5,10-methenyltetrahydrofolate + NADPH. It carries out the reaction (6R)-5,10-methenyltetrahydrofolate + H2O = (6R)-10-formyltetrahydrofolate + H(+). Its pathway is one-carbon metabolism; tetrahydrofolate interconversion. Functionally, catalyzes the oxidation of 5,10-methylenetetrahydrofolate to 5,10-methenyltetrahydrofolate and then the hydrolysis of 5,10-methenyltetrahydrofolate to 10-formyltetrahydrofolate. The protein is Bifunctional protein FolD of Chelativorans sp. (strain BNC1).